We begin with the raw amino-acid sequence, 72 residues long: Phaiodotoxin-2 (72 aa).

The region spanning 1-72 is the LCN-type CS-alpha/beta domain; that stretch reads KFIRHKDESF…CFGALESKCA (72 aa). 4 disulfides stabilise this stretch: Cys-13/Cys-38, Cys-23/Cys-50, Cys-27/Cys-52, and Cys-63/Cys-71.

It belongs to the long (4 C-C) scorpion toxin superfamily. Sodium channel inhibitor family. In terms of tissue distribution, expressed by the venom gland.

Its subcellular location is the secreted. In terms of biological role, sodium channel (Nav) specific neurotoxin. The chain is Phaiodotoxin-2 from Anuroctonus phaiodactylus (Mafia scorpion).